A 218-amino-acid chain; its full sequence is MSLKWQYINWEEYNNGKTRIYQIYPYAYDALEPHFDKETMNIHHTKHHNTYITNLNAALEGHAELADKSVEELVANLNEVPEAIRTAVRNNGGGHANHTFFWTILSPNGGGQPVGELATAIEAKFGSFDAFKEEFAKAGATRFGSGWAWLVVNNGELEVTSTPNQDSPLTEGKTPVIGLDVWEHAYYLNYQNRRPDYIGAFWNVVDWNAAEKRYQEAK.

Residues histidine 43, histidine 98, aspartate 180, and histidine 184 each coordinate Mn(2+).

It belongs to the iron/manganese superoxide dismutase family. As to quaternary structure, homodimer. It depends on Mn(2+) as a cofactor.

The enzyme catalyses 2 superoxide + 2 H(+) = H2O2 + O2. In terms of biological role, destroys superoxide anion radicals which are normally produced within the cells and which are toxic to biological systems. The polypeptide is Superoxide dismutase [Mn] 1 (sodA1) (Bacillus cereus (strain ATCC 14579 / DSM 31 / CCUG 7414 / JCM 2152 / NBRC 15305 / NCIMB 9373 / NCTC 2599 / NRRL B-3711)).